The primary structure comprises 642 residues: Chaperone protein DnaK (642 aa).

A Phosphothreonine; by autocatalysis modification is found at Thr-198. Residues 602-642 are disordered; it reads EAAGGAEAEAAAGGHGGASGSHDDKVVDADFEEVDGDKKGK. The span at 603–613 shows a compositional bias: low complexity; the sequence is AAGGAEAEAAA.

This sequence belongs to the heat shock protein 70 family.

Its function is as follows. Acts as a chaperone. This Paramagnetospirillum magneticum (strain ATCC 700264 / AMB-1) (Magnetospirillum magneticum) protein is Chaperone protein DnaK.